A 757-amino-acid chain; its full sequence is Elongation factor G, mitochondrial (757 aa).

Residues 1 to 39 (MLLVPRVPVVMQGKCGLLKISRPLQGSLSRGFHFSRAHR) constitute a mitochondrion transit peptide. The tr-type G domain maps to 65 to 346 (QKLRNIGISA…AIVDYLPNPS (282 aa)). Residues 74-81 (AHIDSGKT), 145-149 (DTPGH), and 199-202 (NKMD) each bind GTP.

Belongs to the TRAFAC class translation factor GTPase superfamily. Classic translation factor GTPase family. EF-G/EF-2 subfamily.

The protein resides in the mitochondrion. Its pathway is protein biosynthesis; polypeptide chain elongation. Its function is as follows. Mitochondrial GTPase that catalyzes the GTP-dependent ribosomal translocation step during translation elongation. During this step, the ribosome changes from the pre-translocational (PRE) to the post-translocational (POST) state as the newly formed A-site-bound peptidyl-tRNA and P-site-bound deacylated tRNA move to the P and E sites, respectively. Catalyzes the coordinated movement of the two tRNA molecules, the mRNA and conformational changes in the ribosome. The polypeptide is Elongation factor G, mitochondrial (Candida glabrata (strain ATCC 2001 / BCRC 20586 / JCM 3761 / NBRC 0622 / NRRL Y-65 / CBS 138) (Yeast)).